Reading from the N-terminus, the 201-residue chain is Holliday junction branch migration complex subunit RuvA (201 aa).

A domain I region spans residues methionine 1 to glutamine 63. The domain II stretch occupies residues serine 64–lysine 142. The tract at residues alanine 143–serine 153 is flexible linker. The domain III stretch occupies residues serine 153–lysine 201.

It belongs to the RuvA family. As to quaternary structure, homotetramer. Forms an RuvA(8)-RuvB(12)-Holliday junction (HJ) complex. HJ DNA is sandwiched between 2 RuvA tetramers; dsDNA enters through RuvA and exits via RuvB. An RuvB hexamer assembles on each DNA strand where it exits the tetramer. Each RuvB hexamer is contacted by two RuvA subunits (via domain III) on 2 adjacent RuvB subunits; this complex drives branch migration. In the full resolvosome a probable DNA-RuvA(4)-RuvB(12)-RuvC(2) complex forms which resolves the HJ.

The protein localises to the cytoplasm. Its function is as follows. The RuvA-RuvB-RuvC complex processes Holliday junction (HJ) DNA during genetic recombination and DNA repair, while the RuvA-RuvB complex plays an important role in the rescue of blocked DNA replication forks via replication fork reversal (RFR). RuvA specifically binds to HJ cruciform DNA, conferring on it an open structure. The RuvB hexamer acts as an ATP-dependent pump, pulling dsDNA into and through the RuvAB complex. HJ branch migration allows RuvC to scan DNA until it finds its consensus sequence, where it cleaves and resolves the cruciform DNA. This is Holliday junction branch migration complex subunit RuvA from Listeria innocua serovar 6a (strain ATCC BAA-680 / CLIP 11262).